The following is a 462-amino-acid chain: Beta-glucosidase 1A (462 aa).

3 residues coordinate substrate: Q20, H123, and N169. E170 (proton donor) is an active-site residue. Y301 contributes to the substrate binding site. E365 serves as the catalytic Nucleophile. Substrate is bound by residues W415 and 422 to 423 (EW).

The protein belongs to the glycosyl hydrolase 1 family.

The catalysed reaction is Hydrolysis of terminal, non-reducing beta-D-glucosyl residues with release of beta-D-glucose.. Functionally, plays an important role in cellulose degradation. Shows hydrolytic activity against several glycosidic compounds. The sequence is that of Beta-glucosidase 1A from Phanerodontia chrysosporium (White-rot fungus).